The chain runs to 353 residues: Photosystem II protein D1 (353 aa).

Thr2 is modified (N-acetylthreonine). Position 2 is a phosphothreonine (Thr2). 3 helical membrane-spanning segments follow: residues 29-46 (YIGWFGVLMIPTLLTATS), 118-133 (HFLLGVACYMGREWEL), and 142-156 (WIAVAYSAPVAAATA). His118 serves as a coordination point for chlorophyll a. Tyr126 is a binding site for pheophytin a. [CaMn4O5] cluster contacts are provided by Asp170 and Glu189. A helical transmembrane segment spans residues 197 to 218 (FHMLGVAGVFGGSLFSAMHGSL). His198 serves as a coordination point for chlorophyll a. Residues His215 and 264 to 265 (SF) contribute to the a quinone site. Position 215 (His215) interacts with Fe cation. His272 contributes to the Fe cation binding site. A helical transmembrane segment spans residues 274–288 (FLAAWPVVGIWFTAL). [CaMn4O5] cluster is bound by residues His332, Glu333, Asp342, and Ala344. Positions 345-353 (AVEVPAING) are excised as a propeptide.

Belongs to the reaction center PufL/M/PsbA/D family. In terms of assembly, PSII is composed of 1 copy each of membrane proteins PsbA, PsbB, PsbC, PsbD, PsbE, PsbF, PsbH, PsbI, PsbJ, PsbK, PsbL, PsbM, PsbT, PsbX, PsbY, PsbZ, Psb30/Ycf12, at least 3 peripheral proteins of the oxygen-evolving complex and a large number of cofactors. It forms dimeric complexes. The cofactor is The D1/D2 heterodimer binds P680, chlorophylls that are the primary electron donor of PSII, and subsequent electron acceptors. It shares a non-heme iron and each subunit binds pheophytin, quinone, additional chlorophylls, carotenoids and lipids. D1 provides most of the ligands for the Mn4-Ca-O5 cluster of the oxygen-evolving complex (OEC). There is also a Cl(-1) ion associated with D1 and D2, which is required for oxygen evolution. The PSII complex binds additional chlorophylls, carotenoids and specific lipids.. In terms of processing, tyr-161 forms a radical intermediate that is referred to as redox-active TyrZ, YZ or Y-Z. C-terminally processed by CTPA; processing is essential to allow assembly of the oxygen-evolving complex and thus photosynthetic growth.

Its subcellular location is the plastid. It localises to the chloroplast thylakoid membrane. It carries out the reaction 2 a plastoquinone + 4 hnu + 2 H2O = 2 a plastoquinol + O2. Its function is as follows. Photosystem II (PSII) is a light-driven water:plastoquinone oxidoreductase that uses light energy to abstract electrons from H(2)O, generating O(2) and a proton gradient subsequently used for ATP formation. It consists of a core antenna complex that captures photons, and an electron transfer chain that converts photonic excitation into a charge separation. The D1/D2 (PsbA/PsbD) reaction center heterodimer binds P680, the primary electron donor of PSII as well as several subsequent electron acceptors. This is Photosystem II protein D1 from Hordeum vulgare (Barley).